The sequence spans 694 residues: LMBR1 domain-containing protein 2 homolog (694 aa).

Topologically, residues 1–3 (MAY) are extracellular. The helical transmembrane segment at 4 to 26 (LLSFGIVAALFLASISLYRYGNI) threads the bilayer. Over 27–30 (PRQH) the chain is Cytoplasmic. Residues 31–51 (ILVTLSVLTAWCFSFLIVFTI) traverse the membrane as a helical segment. The Extracellular segment spans residues 52-106 (PLDVTSTLYRQCVEEHRPTPAPNVTNTSSATVGPPPQCQEPWGMVPASVFPNLWR). 2 N-linked (GlcNAc...) asparagine glycosylation sites follow: N74 and N77. Residues 107–127 (IIYWSSQFLTWLIMPLMQSYL) traverse the membrane as a helical segment. Residues 128 to 144 (KAGDFTVKGKLKSALIE) are Cytoplasmic-facing. The helical transmembrane segment at 145-165 (NAIYYGSYLFICGVLLIYIAV) threads the bilayer. Residues 166-181 (KGESLDWQKLKAIASS) are Extracellular-facing. The helical transmembrane segment at 182-202 (ASNTWGLFLLILLLGYALVEV) threads the bilayer. Residues 203–381 (PRSLWNNAKP…ECLLKAPFLK (179 aa)) are Cytoplasmic-facing. The stretch at 222 to 249 (KAAKLSTEKAEAEEHVDDILESLQGLSR) forms a coiled coil. A helical membrane pass occupies residues 382-402 (TMCVLTATMSAMVVWSELTFF). The Extracellular portion of the chain corresponds to 403–426 (SRHPVLSIFANVIYVAKESYDFFT). The chain crosses the membrane as a helical span at residues 427 to 447 (IEVFSMVVLCYFFYCTYSTIL). The Cytoplasmic portion of the chain corresponds to 448–467 (RIRFLNLYYLAPHHQTNEHS). The chain crosses the membrane as a helical span at residues 468–488 (LIFSGMLLCRLTPPMCLNFLG). Topologically, residues 489 to 514 (LIHMDTHIIPNRIMETVYTQIMGHMD) are extracellular. A helical transmembrane segment spans residues 515-535 (VIGIISNGFNIYFPMCMLAFC). Topologically, residues 536–694 (LATWFSLGSR…PPPRGLFDDV (159 aa)) are cytoplasmic. A coiled-coil region spans residues 564–592 (ELVQEGKDLIAREKRRRQRAEEAMARRRD). Positions 673 to 694 (DYEAETDGRIVGPPPRGLFDDV) are disordered.

The protein belongs to the LIMR family.

The protein resides in the membrane. The sequence is that of LMBR1 domain-containing protein 2 homolog from Drosophila melanogaster (Fruit fly).